Consider the following 462-residue polypeptide: UPF0236 protein TTE2489 (462 aa).

Belongs to the UPF0236 family.

This chain is UPF0236 protein TTE2489, found in Caldanaerobacter subterraneus subsp. tengcongensis (strain DSM 15242 / JCM 11007 / NBRC 100824 / MB4) (Thermoanaerobacter tengcongensis).